The following is a 63-amino-acid chain: Small integral membrane protein 43 (63 aa).

Important for interaction with SLC2A1 and SLC2A3 stretches follow at residues 7 to 29 and 51 to 57; these read LLLYLALFFFLLFLLFLLLFVVI and HREPWGF. The helical transmembrane segment at 9-29 threads the bilayer; the sequence is LYLALFFFLLFLLFLLLFVVI.

Interacts with glucose transporters SLC2A1/GLUT1 and SLC2A3/GLUT3; the interactions may promote SLC2A1- and SLC2A3-mediated glucose transport to meet the energy needs of mesendoderm differentiation. Accumulates in the posterior primitive streak of mid-gastrulation embryos at 7.0 dpc. In the adult, highly abundant and enriched in the brain compared to other organs.

It is found in the cell membrane. In terms of biological role, required for mesendoderm differentiation. Interacts with glucose transporters and promotes glucose uptake. Probably augments the glucose uptake capacity of glucose transporter proteins to meet the energy needs of mesendoderm differentiation. This is Small integral membrane protein 43 from Mus musculus (Mouse).